A 130-amino-acid polypeptide reads, in one-letter code: Splicing regulatory small protein (130 aa).

Over residues 1-10 the composition is skewed to basic residues; sequence MRTKPQRPRA. Disordered regions lie at residues 1 to 29 and 74 to 130; these read MRTK…EETG and GRAL…STRR. Residues 16–22 are mediates interaction with SRSF3; the sequence is GQPCGSP. The span at 77-98 shows a compositional bias: basic and acidic residues; the sequence is LEPKADPHTCPYGRKESRGEKV. Positions 120–130 are enriched in polar residues; the sequence is SLKSGSPSTRR.

As to quaternary structure, interacts with SRSF3; increases SRSF3 binding to specific exons.

It is found in the nucleus. Functionally, interacts with the splicing factor SRSF3 and increases its binding to specific exons within pre-mRNA, thereby regulating exon-inclusion during alternative splicing. Does not directly bind pre-mRNA and could regulate a wider range of splicing factors through a similar mechanism. The protein is Splicing regulatory small protein of Homo sapiens (Human).